The primary structure comprises 1240 residues: Selection and upkeep of intraepithelial T-cells protein 6 (1240 aa).

A signal peptide spans 1 to 24 (MGTIGVPLTAHCVVLFLLQMVALS). Topologically, residues 25–1086 (TEQFTVNGLE…CNKRNPFWKK (1062 aa)) are extracellular. An Ig-like V-type domain is found at 26–141 (EQFTVNGLES…EEHIIEVKVT (116 aa)). C49 and C123 are joined by a disulfide. Residues 142-231 (ATSSDIQILM…FVTHQEESIS (90 aa)) form the Ig-like C1-type domain. 3 N-linked (GlcNAc...) asparagine glycosylation sites follow: N155, N200, and N314. A disulfide bond links C163 and C217. The chain crosses the membrane as a helical span at residues 1087-1107 (HALDLGISVFAIIVVTLIRHL). Residues 1108–1125 (NQREADQHFELDTLWSKD) lie on the Cytoplasmic side of the membrane. Residues 1126-1146 (TSVILCVLIMFNNRLKALIYF) traverse the membrane as a helical segment. At 1147–1167 (RLYGYSPPGKTYKYIVNYILR) the chain is on the extracellular side. Residues 1168-1188 (FSQPLFFIVYSAIILVMHLQI) traverse the membrane as a helical segment. Over 1189 to 1205 (QNTDSLFSLYNSWMVEM) the chain is Cytoplasmic. A helical membrane pass occupies residues 1206–1226 (IMVLGLLLAIFNVKNIATALL). Over 1227-1240 (HLGRTTLRLFRIKD) the chain is Extracellular.

It belongs to the SKINT family. Expressed in skin.

The protein localises to the membrane. In terms of biological role, may act by engaging a cell surface molecule on immature T-cells in the embryonic thymus. The sequence is that of Selection and upkeep of intraepithelial T-cells protein 6 (Skint6) from Mus musculus (Mouse).